A 113-amino-acid polypeptide reads, in one-letter code: Putative pterin-4-alpha-carbinolamine dehydratase (113 aa).

This sequence belongs to the pterin-4-alpha-carbinolamine dehydratase family.

It carries out the reaction (4aS,6R)-4a-hydroxy-L-erythro-5,6,7,8-tetrahydrobiopterin = (6R)-L-erythro-6,7-dihydrobiopterin + H2O. The polypeptide is Putative pterin-4-alpha-carbinolamine dehydratase (Saccharophagus degradans (strain 2-40 / ATCC 43961 / DSM 17024)).